The chain runs to 312 residues: MILVFCGTPRFAVPSLEHIVRAGHDVRLVVTQPDRPKGRGMGLAFSPVKDAALALNLPVTQPEKIKNNEEFRAQLSAIAPDAIIVVGYGRIIPQWMIDLPPLGNINVHASLLPKYRGAAPIQWAIAMGEAVTGVTTMKIDAGLDTGDMLLQAEMPIAPEDTSESLAPRLAELGAELLVETLARLEGGVIAAVPQNHAEHTLAPILKKEDGQIDFHRSAQEILNRLRGFTPWPGAFTQFRGKGFFIHQARAVAATLEPGELRIEGENLLVGAGHNTALELLEIQLEGKKRMPARDFINGYRPNSADKLGRLSS.

Residue 110–113 (SLLP) coordinates (6S)-5,6,7,8-tetrahydrofolate.

Belongs to the Fmt family.

The catalysed reaction is L-methionyl-tRNA(fMet) + (6R)-10-formyltetrahydrofolate = N-formyl-L-methionyl-tRNA(fMet) + (6S)-5,6,7,8-tetrahydrofolate + H(+). Functionally, attaches a formyl group to the free amino group of methionyl-tRNA(fMet). The formyl group appears to play a dual role in the initiator identity of N-formylmethionyl-tRNA by promoting its recognition by IF2 and preventing the misappropriation of this tRNA by the elongation apparatus. The sequence is that of Methionyl-tRNA formyltransferase from Koribacter versatilis (strain Ellin345).